Reading from the N-terminus, the 2531-residue chain is Putative neurobeachin homolog (2531 aa).

Acidic residues-rich tracts occupy residues 1-10 (MDISETEYND), 26-35 (EDEVNDEESN), and 62-74 (EPSD…EESE). Disordered stretches follow at residues 1–101 (MDIS…SPPP), 1363–1398 (NDGD…DNGG), 1420–1440 (EELK…MPPQ), and 1642–1670 (RFVP…EISE). The span at 1363–1379 (NDGDHASIKNGSDHSEN) shows a compositional bias: basic and acidic residues. The segment covering 1427–1440 (QSNGRRPSTLMPPQ) has biased composition (polar residues). Residues 1650–1670 (SRHEEANLPEGEKNEEPEISE) show a composition bias toward basic and acidic residues. Positions 1714-1822 (PSSQSACFST…TVRKVVYQLP (109 aa)) constitute a BEACH-type PH domain. The region spanning 1841–2130 (MTPRQLFKHS…QLLAEAHPPR (290 aa)) is the BEACH domain. 4 WD repeats span residues 2289-2332 (GHGD…GFIA), 2350-2389 (GHEA…LRRI), 2429-2468 (LSEE…KLYT), and 2471-2510 (PLNS…WHYE).

It belongs to the WD repeat neurobeachin family. Interacts with RII subunit of PKA.

Its subcellular location is the cytoplasm. The protein localises to the membrane. It is found in the nucleus. Functionally, binds to type II regulatory subunits of protein kinase A and anchors/targets them to the membrane. May anchor the kinase to cytoskeletal and/or organelle-associated proteins. Regulates endosomal traffic in polarized epithelial cells such as the vulval precursor cells and intestinal cells. Thought to act as a negative regulator of lin-12 activity in vulval precursor cells. May have a role in the internalization process from basolateral surface of polarized epithelial cells. In Caenorhabditis briggsae, this protein is Putative neurobeachin homolog.